A 796-amino-acid polypeptide reads, in one-letter code: Vacuolar protein sorting-associated protein 35 (796 aa).

S7 is subject to Phosphoserine. Interaction with SNX3 regions lie at residues 25-44 (VQSFQMKRCLDKNKLMDALK) and 205-215 (DREKRERERQE). An interaction with SLC11A2 region spans residues 438–796 (CYVLSNVLDY…EGPIYEGLIL (359 aa)). Residues 500–693 (SEDPDQQYLI…DKNGEELHGG (194 aa)) form an interaction with IGF2R cytoplasmic domain region. The residue at position 783 (S783) is a Phosphoserine. Position 791 is a phosphotyrosine (Y791).

It belongs to the VPS35 family. Component of the heterotrimeric retromer cargo-selective complex (CSC), also decribed as vacuolar protein sorting subcomplex (VPS), formed by VPS26 (VPS26A or VPS26B), VPS29 and VPS35. The CSC has a highly elongated structure with VPS26 and VPS29 binding independently at opposite distal ends of VPS35 as central platform. The CSC is believed to associate with variable sorting nexins to form functionally distinct retromer complex variants. The originally described retromer complex (also called SNX-BAR retromer) is a pentamer containing the CSC and a heterodimeric membrane-deforming subcomplex formed between SNX1 or SNX2 and SNX5 or SNX6 (also called SNX-BAR subcomplex); the respective CSC and SNX-BAR subcomplexes associate with low affinity. The CSC associates with SNX3 to form a SNX3-retromer complex. The CSC associates with SNX27, the WASH complex and the SNX-BAR subcomplex to form the SNX27-retromer complex. Interacts with VPS26A, VPS26B, VPS29, SNX1, SNX2, IGF2R, SNX3, GOLPH3, LRRK2, SLC11A2, WASHC2A, WASHC2C, FKBP15, WASHC1, RAB7A, SNX27, WASHC5, EHD1. Interacts with MAGEL2; leading to recruitment of the TRIM27:MAGEL2 E3 ubiquitin ligase complex retromer-containing endosomes. Interacts with SORCS2. In terms of assembly, (Microbial infection) Interacts with human papillomavirus 16 minor capsid protein L2 (via C-terminus); this interaction mediates the transport of the capsid from the early endosome to the Golgi apparatus. Ubiquitous. Highly expressed in heart, brain, placenta, skeletal muscle, spleen, thymus, testis, ovary, small intestine, kidney and colon.

Its subcellular location is the cytoplasm. The protein localises to the membrane. It is found in the endosome. The protein resides in the early endosome. It localises to the late endosome. Acts as a component of the retromer cargo-selective complex (CSC). The CSC is believed to be the core functional component of retromer or respective retromer complex variants acting to prevent missorting of selected transmembrane cargo proteins into the lysosomal degradation pathway. The recruitment of the CSC to the endosomal membrane involves RAB7A and SNX3. The CSC seems to associate with the cytoplasmic domain of cargo proteins predominantly via VPS35; however, these interactions seem to be of low affinity and retromer SNX proteins may also contribute to cargo selectivity thus questioning the classical function of the CSC. The SNX-BAR retromer mediates retrograde transport of cargo proteins from endosomes to the trans-Golgi network (TGN) and is involved in endosome-to-plasma membrane transport for cargo protein recycling. The SNX3-retromer mediates the retrograde endosome-to-TGN transport of WLS distinct from the SNX-BAR retromer pathway. The SNX27-retromer is believed to be involved in endosome-to-plasma membrane trafficking and recycling of a broad spectrum of cargo proteins. The CSC seems to act as recruitment hub for other proteins, such as the WASH complex and TBC1D5. Required for retrograde transport of lysosomal enzyme receptor IGF2R and SLC11A2. Required to regulate transcytosis of the polymeric immunoglobulin receptor (pIgR-pIgA). Required for endosomal localization of WASHC2C. Mediates the association of the CSC with the WASH complex via WASHC2. Required for the endosomal localization of TBC1D5. In terms of biological role, (Microbial infection) The heterotrimeric retromer cargo-selective complex (CSC) mediates the exit of human papillomavirus from the early endosome and the delivery to the Golgi apparatus. This is Vacuolar protein sorting-associated protein 35 from Homo sapiens (Human).